Reading from the N-terminus, the 256-residue chain is Histone H1 (256 aa).

Low complexity-rich tracts occupy residues 1 to 19 (MSDS…PPAT) and 27 to 43 (KKAS…ASAT). 2 disordered regions span residues 1–53 (MSDS…QQMV) and 108–256 (GKGA…AAKK). Ser11 carries the phosphoserine modification. One can recognise an H15 domain in the interval 45–119 (SHPPTQQMVD…GASGSFKLSA (75 aa)). 2 stretches are compositionally biased toward basic and acidic residues: residues 121–140 (AKKE…EKKV) and 176–193 (KTAE…DAKK). The span at 194-229 (TGIIKSKPAATKAKVTAAKPKAVVAKASKAKPAVSA) shows a compositional bias: low complexity. The span at 245–256 (KKPKAKTTAAKK) shows a compositional bias: basic residues.

Belongs to the histone H1/H5 family. In terms of processing, phosphorylated in oocytes during prophase I of meiosis.

Its subcellular location is the nucleus. It is found in the chromosome. Functionally, histones H1 are necessary for the condensation of nucleosome chains into higher-order structures. The chain is Histone H1 (His1) from Drosophila melanogaster (Fruit fly).